We begin with the raw amino-acid sequence, 434 residues long: Serine hydroxymethyltransferase (434 aa).

120–122 (GHI) is a (6S)-5,6,7,8-tetrahydrofolate binding site. Lysine 236 bears the N6-(pyridoxal phosphate)lysine mark. Glutamate 255 contributes to the (6S)-5,6,7,8-tetrahydrofolate binding site.

This sequence belongs to the SHMT family. As to quaternary structure, homodimer. Pyridoxal 5'-phosphate serves as cofactor.

It is found in the cytoplasm. It participates in amino-acid biosynthesis; glycine biosynthesis; glycine from L-serine: step 1/1. Functionally, catalyzes the reversible interconversion of serine and glycine with a modified folate serving as the one-carbon carrier. Also exhibits a pteridine-independent aldolase activity toward beta-hydroxyamino acids, producing glycine and aldehydes, via a retro-aldol mechanism. This chain is Serine hydroxymethyltransferase, found in Korarchaeum cryptofilum (strain OPF8).